The primary structure comprises 299 residues: Probable alpha-L-glutamate ligase 2 (299 aa).

Residues 104 to 287 (MQLMSRRGIG…VAGAIIEFVE (184 aa)) enclose the ATP-grasp domain. Residues K141, 178-179 (EY), D187, and 211-213 (RSN) contribute to the ATP site. Mg(2+) contacts are provided by D248, E260, and N262. Positions 248, 260, and 262 each coordinate Mn(2+).

This sequence belongs to the RimK family. Requires Mg(2+) as cofactor. Mn(2+) is required as a cofactor.

The chain is Probable alpha-L-glutamate ligase 2 from Shewanella sp. (strain MR-4).